A 193-amino-acid polypeptide reads, in one-letter code: MSSLKHQLKTYHIPFDDQMLERLERYTALLLEWNRAHNLTGAKNSQEVEEHLIDSLYPLRFLPPFDSCADIGTGAGFPGLILAIALPKSHFDLIEPLKKRVAFLHYCVMELGLSNVSIHAKRIEALTLEAPDLITSRAVTSTQTLLSLARPLIAPHTSILFYKGERVLGEIQEEEGYTITPFKQRRYLFKQGV.

S-adenosyl-L-methionine-binding positions include G72, F77, 123–124 (IE), and R137.

The protein belongs to the methyltransferase superfamily. RNA methyltransferase RsmG family.

The protein localises to the cytoplasm. The catalysed reaction is guanosine(527) in 16S rRNA + S-adenosyl-L-methionine = N(7)-methylguanosine(527) in 16S rRNA + S-adenosyl-L-homocysteine. In terms of biological role, specifically methylates the N7 position of guanine in position 527 of 16S rRNA. This chain is Ribosomal RNA small subunit methyltransferase G, found in Wolinella succinogenes (strain ATCC 29543 / DSM 1740 / CCUG 13145 / JCM 31913 / LMG 7466 / NCTC 11488 / FDC 602W) (Vibrio succinogenes).